The sequence spans 148 residues: Large ribosomal subunit protein bL9 (148 aa).

It belongs to the bacterial ribosomal protein bL9 family.

Functionally, binds to the 23S rRNA. This is Large ribosomal subunit protein bL9 from Frankia casuarinae (strain DSM 45818 / CECT 9043 / HFP020203 / CcI3).